Here is a 772-residue protein sequence, read N- to C-terminus: Calcium-binding mitochondrial carrier protein (772 aa).

The interval 1-377 (MFANRVRQAQ…SISDFEKSTG (377 aa)) is N-terminal domain. EF-hand domains follow at residues 132–165 (LDADKFKVLFQMADVDHTGYISFDEYVMFDELMA), 166–201 (KPEAEYFLAFKLFDRDGNGYISKNDFKHVITASLDP), 235–270 (LQQERIKQEFKFHDKYNSGYIPRDKFAKVLGSVKLR), and 347–382 (ITPLEIDLIFHLFDLNKDGKLSISDFEKSTGLNINK). The Ca(2+) site is built by D145, D147, T149, Y151, E156, D179, D181, N183, Y185, and D190. Ca(2+) is bound by residues D360, N362, D364, K366, and D371. Positions 378 to 422 (LNINKIGGGTNYSDSYPSDSHVTIQNSSTTPSPSTPITNTAAAIA) are linker loop domain. The tract at residues 432-720 (AQQVLESIEN…KALLPDAEYK (289 aa)) is carrier domain. Solcar repeat units follow at residues 436-526 (LESI…LRDL), 535-616 (IYFP…MKTI), and 624-712 (LGPM…LQKA). Helical transmembrane passes span 442–459 (FALGSIAGGIGAAAVYPI), 501–520 (GILPQMVGVAPEKAIKLTVN), 545–558 (GFAGMSQVCVTNPL), 591–610 (GAGACLLRDIPFSAIYFPTY), 630–647 (LLAGAVAGIPAASLVTPA), and 687–706 (GALARVFRSSPQFGVTLVSY). Residues 721 to 772 (PPTNAPITQKDFDVIRGNTNTVQRVIDMESKFGTLHQTRDNNKSSNGGENKN) form a C-terminal domain region. Residues 751–772 (KFGTLHQTRDNNKSSNGGENKN) are disordered. The segment covering 763 to 772 (KSSNGGENKN) has biased composition (low complexity).

The protein belongs to the mitochondrial carrier (TC 2.A.29) family. Homodimer (via N-terminus).

It is found in the mitochondrion inner membrane. Mitochondrial and calcium-binding carrier that catalyzes the calcium-dependent exchange of cytoplasmic glutamate with mitochondrial aspartate across the mitochondrial inner membrane. This chain is Calcium-binding mitochondrial carrier protein (mcfO), found in Dictyostelium discoideum (Social amoeba).